We begin with the raw amino-acid sequence, 732 residues long: Protein FAR1-RELATED SEQUENCE 4 (732 aa).

The FAR1 domain occupies 11 to 97 (LFYKDYAKSV…VKEHNHDLLP (87 aa)). The 97-residue stretch at 212–308 (VVSFETSYFV…CLWHVLDQLP (97 aa)) folds into the MULE domain. Residues 490–526 (YLVDWDEFKSDIYCSCRSFEYKGYLCRHAIVVLQMSG) form an SWIM-type zinc finger. The tract at residues 623–683 (QEENQYGSTS…ETVGEGSQEG (61 aa)) is disordered. Positions 624 to 635 (EENQYGSTSTQI) are enriched in polar residues.

Belongs to the FHY3/FAR1 family. In terms of tissue distribution, expressed in hypocotyls, rosette and cauline leaves, inflorescences stems, flowers and siliques.

Its subcellular location is the nucleus. Functionally, putative transcription activator involved in regulating light control of development. This chain is Protein FAR1-RELATED SEQUENCE 4 (FRS4), found in Arabidopsis thaliana (Mouse-ear cress).